Here is a 362-residue protein sequence, read N- to C-terminus: Phosphoserine aminotransferase (362 aa).

R42 provides a ligand contact to L-glutamate. Pyridoxal 5'-phosphate is bound by residues 76-77 (AR), W102, T153, D174, and Q197. K198 is subject to N6-(pyridoxal phosphate)lysine. Position 239 to 240 (239 to 240 (NT)) interacts with pyridoxal 5'-phosphate.

This sequence belongs to the class-V pyridoxal-phosphate-dependent aminotransferase family. SerC subfamily. Homodimer. It depends on pyridoxal 5'-phosphate as a cofactor.

The protein resides in the cytoplasm. It carries out the reaction O-phospho-L-serine + 2-oxoglutarate = 3-phosphooxypyruvate + L-glutamate. The catalysed reaction is 4-(phosphooxy)-L-threonine + 2-oxoglutarate = (R)-3-hydroxy-2-oxo-4-phosphooxybutanoate + L-glutamate. The protein operates within amino-acid biosynthesis; L-serine biosynthesis; L-serine from 3-phospho-D-glycerate: step 2/3. It functions in the pathway cofactor biosynthesis; pyridoxine 5'-phosphate biosynthesis; pyridoxine 5'-phosphate from D-erythrose 4-phosphate: step 3/5. Catalyzes the reversible conversion of 3-phosphohydroxypyruvate to phosphoserine and of 3-hydroxy-2-oxo-4-phosphonooxybutanoate to phosphohydroxythreonine. This is Phosphoserine aminotransferase from Xenorhabdus nematophila (strain ATCC 19061 / DSM 3370 / CCUG 14189 / LMG 1036 / NCIMB 9965 / AN6).